The primary structure comprises 420 residues: Putative T-box protein 33 (420 aa).

Residues 93-291 (LWKELHYLSN…ANPTSRGDAK (199 aa)) constitute a DNA-binding region (T-box). Polar residues predominate over residues 395–412 (SPPLQPTATSPEASQNQI). Positions 395-420 (SPPLQPTATSPEASQNQIKLEMNQYM) are disordered.

It is found in the nucleus. The polypeptide is Putative T-box protein 33 (tbx-33) (Caenorhabditis elegans).